The chain runs to 191 residues: SCO2-like protein RP031 (191 aa).

Belongs to the SCO1/2 family.

The polypeptide is SCO2-like protein RP031 (Rickettsia prowazekii (strain Madrid E)).